Here is a 1110-residue protein sequence, read N- to C-terminus: Nonribisomal peptide synthetase benY (1110 aa).

An adenylation region spans residues 47-443 (RALEFPEKIA…GRKDHQLKVR (397 aa)). One can recognise a Carrier domain in the interval 575–651 (TLETESEKIL…EMAQSARVVP (77 aa)). Ser-612 carries the post-translational modification O-(pantetheine 4'-phosphoryl)serine. A condensation region spans residues 713 to 1025 (YILDGDVDFD…IFHHQNIDTK (313 aa)).

Belongs to the NRP synthetase family.

The protein operates within secondary metabolite biosynthesis. Functionally, nonribisomal peptide synthetase; part of the gene cluster that mediates the biosynthesis of benzomalvin A and D. The pathway begins with the loading of amino acid precursors onto the A domains of the non ribosomal peptide synthetases benY and benZ. BenY and the A1 domain of benZ are loaded with anthranilate (Anth), while the A2 domain of benZ is loaded with phenylalanine (Phe). N-methylation of Phe by the methyltransferase benX may happen before loading of Phe onto benZ, after loading of Phe, or after dipeptide formation. Condensation of Anth with the secondary amine of NmPhe or Phe is catalyzed by the C1 domain of benZ, forming a dipeptide intermediate. This is followed by in trans condensation of the Anth-NmPhe dipeptide with Anth bound to the T domain of benY by the C2 domain of benZ to form the linear tripeptide Anth-NmPhe-Anth. Cyclization and release of the tripeptide is then catalyzed by the C-terminal C domain of benY and the resulting 11-member macrocyclic intermediate is expected to spontaneously collapse to form the benzodiazepine core. Benzomalvin A is in conformational equilibrium with its atropisomer, benzomalvin D. This Aspergillus terreus protein is Nonribisomal peptide synthetase benY.